The sequence spans 115 residues: Large ribosomal subunit protein bL19 (115 aa).

Belongs to the bacterial ribosomal protein bL19 family.

This protein is located at the 30S-50S ribosomal subunit interface and may play a role in the structure and function of the aminoacyl-tRNA binding site. The sequence is that of Large ribosomal subunit protein bL19 from Sodalis glossinidius (strain morsitans).